The primary structure comprises 418 residues: MEIRDVETVNRINLHSHIAGLGCDGDEVEYDKDGLVGQIKARKAMAVIRKMVESNKGGKVVLIKGDRGSGKTALAIGLSKSLGGVHFNSISGTEIYSLEMSKSEAITQALRKSVGLRIKESVKVIEGEVVSLSGRRIVLKTVDMESSFEIGEKMRGELDKEKVSAGDVIRIVRERGRVYKIGTSMVKRSDVVGTDTRFVPCPEGELIRITEETQEISLHDIDVVNSKAEGYLALFSGETGEIRAETRDEVNKKVWGWINEGKAEIVRGVLFIDEVHMLDIESFAFLNKAVEEDFCPVILVSTNKGECIVRGTDEPSPYGIPRDFIDRALIISMEKHCRRDLEAILRHRILEEDILIDDDAVDRLVSISEASGLRYSMNLLTISSMRASRRNGRVALGDVERAFELFLDEARGTESFNG.

Gly65–Thr72 serves as a coordination point for ATP.

Belongs to the RuvB family. As to quaternary structure, component of the SWR1 chromatin remodeling complex, the INO80 chromatin remodeling complex, and of the R2TP complex.

Its subcellular location is the nucleus. It carries out the reaction ATP + H2O = ADP + phosphate + H(+). Its function is as follows. DNA helicase which participates in several chromatin remodeling complexes, including the SWR1 and the INO80 complexes. The SWR1 complex mediates the ATP-dependent exchange of histone H2A for the H2A variant HZT1 leading to transcriptional regulation of selected genes by chromatin remodeling. The INO80 complex remodels chromatin by shifting nucleosomes and is involved in DNA repair. Also involved in pre-rRNA processing. In Encephalitozoon cuniculi (strain GB-M1) (Microsporidian parasite), this protein is RuvB-like helicase 2 (RVB2).